The sequence spans 241 residues: Venom nerve growth factor 2 (241 aa).

The first 18 residues, 1–18 (MSMLCYTLITAFLIGIWA), serve as a signal peptide directing secretion. Positions 19–125 (APKSEDNVPL…SLNRNIRAKR (107 aa)) are excised as a propeptide. A disordered region spans residues 47–67 (GLKTSRNTDQRHPAPQKAEDQ). Cystine bridges form between C139/C203, C181/C231, and C191/C233.

Belongs to the NGF-beta family. As to quaternary structure, homodimer; non-covalently linked. In terms of tissue distribution, expressed by the venom gland.

The protein resides in the secreted. Functionally, nerve growth factor is important for the development and maintenance of the sympathetic and sensory nervous systems. It stimulates division and differentiation of sympathetic and embryonic sensory neurons as well as basal forebrain cholinergic neurons in the brain. Its relevance in the snake venom is not clear. However, it has been shown to inhibit metalloproteinase-dependent proteolysis of platelet glycoprotein Ib alpha, suggesting a metalloproteinase inhibition to prevent metalloprotease autodigestion and/or protection against prey proteases. Binds a lipid between the two protein chains in the homodimer. The lipid-bound form promotes histamine relase from mouse mast cells, contrary to the lipid-free form. The sequence is that of Venom nerve growth factor 2 from Naja sputatrix (Malayan spitting cobra).